Consider the following 296-residue polypeptide: Polyamine aminopropyltransferase (296 aa).

The 236-residue stretch at 16–251 folds into the PABS domain; the sequence is HLWYFEYYTG…GMWSYTFASK (236 aa). Gln46 contributes to the S-methyl-5'-thioadenosine binding site. Spermidine contacts are provided by His77 and Asp101. S-methyl-5'-thioadenosine is bound by residues Glu121 and 152 to 153; that span reads NG. Asp170 serves as the catalytic Proton acceptor. 170–173 contacts spermidine; that stretch reads DSTD.

Belongs to the spermidine/spermine synthase family. Homodimer or homotetramer.

Its subcellular location is the cytoplasm. The enzyme catalyses S-adenosyl 3-(methylsulfanyl)propylamine + putrescine = S-methyl-5'-thioadenosine + spermidine + H(+). Its pathway is amine and polyamine biosynthesis; spermidine biosynthesis; spermidine from putrescine: step 1/1. In terms of biological role, catalyzes the irreversible transfer of a propylamine group from the amino donor S-adenosylmethioninamine (decarboxy-AdoMet) to putrescine (1,4-diaminobutane) to yield spermidine. The sequence is that of Polyamine aminopropyltransferase from Thermotoga petrophila (strain ATCC BAA-488 / DSM 13995 / JCM 10881 / RKU-1).